We begin with the raw amino-acid sequence, 82 residues long: Small ribosomal subunit protein uS17 (82 aa).

This sequence belongs to the universal ribosomal protein uS17 family. In terms of assembly, part of the 30S ribosomal subunit.

Functionally, one of the primary rRNA binding proteins, it binds specifically to the 5'-end of 16S ribosomal RNA. The protein is Small ribosomal subunit protein uS17 of Rhodopseudomonas palustris (strain HaA2).